Reading from the N-terminus, the 258-residue chain is Type III pantothenate kinase (258 aa).

ATP is bound at residue 6 to 13 (DVGNTNTV). Substrate contacts are provided by residues Tyr-100 and 107 to 110 (GADR). The active-site Proton acceptor is the Asp-109. Asp-129 provides a ligand contact to K(+). Thr-132 is an ATP binding site. Thr-184 is a substrate binding site.

This sequence belongs to the type III pantothenate kinase family. Homodimer. NH4(+) serves as cofactor. The cofactor is K(+).

It is found in the cytoplasm. It catalyses the reaction (R)-pantothenate + ATP = (R)-4'-phosphopantothenate + ADP + H(+). Its pathway is cofactor biosynthesis; coenzyme A biosynthesis; CoA from (R)-pantothenate: step 1/5. Functionally, catalyzes the phosphorylation of pantothenate (Pan), the first step in CoA biosynthesis. The polypeptide is Type III pantothenate kinase (Geobacillus thermodenitrificans (strain NG80-2)).